Reading from the N-terminus, the 182-residue chain is Ribosome-recycling factor (182 aa).

Belongs to the RRF family.

It is found in the cytoplasm. Functionally, responsible for the release of ribosomes from messenger RNA at the termination of protein biosynthesis. May increase the efficiency of translation by recycling ribosomes from one round of translation to another. This chain is Ribosome-recycling factor, found in Prochlorococcus marinus (strain MIT 9515).